Here is a 291-residue protein sequence, read N- to C-terminus: 33 kDa chaperonin (291 aa).

Cystine bridges form between cysteine 237/cysteine 239 and cysteine 270/cysteine 273.

Belongs to the HSP33 family. Under oxidizing conditions two disulfide bonds are formed involving the reactive cysteines. Under reducing conditions zinc is bound to the reactive cysteines and the protein is inactive.

Its subcellular location is the cytoplasm. Functionally, redox regulated molecular chaperone. Protects both thermally unfolding and oxidatively damaged proteins from irreversible aggregation. Plays an important role in the bacterial defense system toward oxidative stress. The polypeptide is 33 kDa chaperonin (Bacillus cereus (strain B4264)).